The sequence spans 436 residues: Glutamyl-tRNA reductase (436 aa).

Residues 49-52, S109, 114-116, and Q120 contribute to the substrate site; these read TCNR and EPQ. C50 serves as the catalytic Nucleophile. Residue 189 to 194 participates in NADP(+) binding; sequence GAGEMC.

It belongs to the glutamyl-tRNA reductase family. In terms of assembly, homodimer.

The catalysed reaction is (S)-4-amino-5-oxopentanoate + tRNA(Glu) + NADP(+) = L-glutamyl-tRNA(Glu) + NADPH + H(+). It participates in porphyrin-containing compound metabolism; protoporphyrin-IX biosynthesis; 5-aminolevulinate from L-glutamyl-tRNA(Glu): step 1/2. Its function is as follows. Catalyzes the NADPH-dependent reduction of glutamyl-tRNA(Glu) to glutamate 1-semialdehyde (GSA). The sequence is that of Glutamyl-tRNA reductase from Pelobacter propionicus (strain DSM 2379 / NBRC 103807 / OttBd1).